The following is a 241-amino-acid chain: 1-(5-phosphoribosyl)-5-[(5-phosphoribosylamino)methylideneamino] imidazole-4-carboxamide isomerase (241 aa).

The active-site Proton acceptor is Asp12. Residue Asp133 is the Proton donor of the active site.

This sequence belongs to the HisA/HisF family.

It localises to the cytoplasm. The enzyme catalyses 1-(5-phospho-beta-D-ribosyl)-5-[(5-phospho-beta-D-ribosylamino)methylideneamino]imidazole-4-carboxamide = 5-[(5-phospho-1-deoxy-D-ribulos-1-ylimino)methylamino]-1-(5-phospho-beta-D-ribosyl)imidazole-4-carboxamide. It participates in amino-acid biosynthesis; L-histidine biosynthesis; L-histidine from 5-phospho-alpha-D-ribose 1-diphosphate: step 4/9. This is 1-(5-phosphoribosyl)-5-[(5-phosphoribosylamino)methylideneamino] imidazole-4-carboxamide isomerase from Persephonella marina (strain DSM 14350 / EX-H1).